Consider the following 243-residue polypeptide: Carboxy-S-adenosyl-L-methionine synthase (243 aa).

S-adenosyl-L-methionine-binding positions include tyrosine 40, 65 to 67, 90 to 91, 118 to 119, asparagine 133, and arginine 200; these read GCS, DN, and DI.

Belongs to the class I-like SAM-binding methyltransferase superfamily. Cx-SAM synthase family. Homodimer.

The catalysed reaction is prephenate + S-adenosyl-L-methionine = carboxy-S-adenosyl-L-methionine + 3-phenylpyruvate + H2O. Its function is as follows. Catalyzes the conversion of S-adenosyl-L-methionine (SAM) to carboxy-S-adenosyl-L-methionine (Cx-SAM). The chain is Carboxy-S-adenosyl-L-methionine synthase from Shewanella woodyi (strain ATCC 51908 / MS32).